We begin with the raw amino-acid sequence, 309 residues long: Putative F-box protein At4g05475 (309 aa).

Residues 1-26 (MATSTTLQSLLMKEDEEQRNKRRTTS) are disordered. In terms of domain architecture, F-box spans 37-84 (RINWVDLPPELTTSILLRLSVTDILDNARKLCRAWRRICKDPSMWRKI).

The protein is Putative F-box protein At4g05475 of Arabidopsis thaliana (Mouse-ear cress).